The primary structure comprises 311 residues: p-hydroxybenzoic acid efflux pump subunit AaeA (311 aa).

The helical transmembrane segment at isoleucine 11–phenylalanine 31 threads the bilayer.

This sequence belongs to the membrane fusion protein (MFP) (TC 8.A.1) family.

The protein localises to the cell inner membrane. Forms an efflux pump with AaeB. The sequence is that of p-hydroxybenzoic acid efflux pump subunit AaeA from Yersinia enterocolitica serotype O:8 / biotype 1B (strain NCTC 13174 / 8081).